The primary structure comprises 489 residues: Ubiquitin carboxyl-terminal hydrolase 14 (489 aa).

A USP domain is found at 102–458 (CGLANLGNTC…SAYVLLYEAR (357 aa)). Cys111 functions as the Nucleophile in the catalytic mechanism. The Proton acceptor role is filled by His409. Positions 467-489 (PPAPVPTEVAADTAEPMEVSEKQ) are disordered.

It belongs to the peptidase C19 family. USP14/UBP6 subfamily.

The enzyme catalyses Thiol-dependent hydrolysis of ester, thioester, amide, peptide and isopeptide bonds formed by the C-terminal Gly of ubiquitin (a 76-residue protein attached to proteins as an intracellular targeting signal).. Its function is as follows. Proteasome-associated deubiquitinase which releases ubiquitin from the proteasome targeted ubiquitinated proteins. Ensures the regeneration of ubiquitin at the proteasome. The chain is Ubiquitin carboxyl-terminal hydrolase 14 (usp-14) from Caenorhabditis elegans.